A 1038-amino-acid polypeptide reads, in one-letter code: Pentatricopeptide repeat-containing protein At5g27270 (1038 aa).

Over residues 23–38 (SRNSRISIKSSSSSSK) the composition is skewed to low complexity. Residues 23-69 (SRNSRISIKSSSSSSKVRPDPWSLSDGNPEKPKPRYERPKHPLSDDD) form a disordered region. A compositionally biased stretch (basic and acidic residues) spans 50-69 (NPEKPKPRYERPKHPLSDDD). 23 PPR repeats span residues 187-221 (SVVV…GCEP), 222-256 (DAVA…RILL), 257-291 (STSV…GVPP), 292-326 (NEFT…GFVP), 327-361 (EEVT…GIVP), 362-396 (SNYT…KIPA), 397-431 (DEVI…NLLA), 432-466 (DEKT…DIPL), 467-501 (SRFA…GLPD), 502-535 (ASSC…QVHF), 536-570 (DIEL…ARVK), 601-631 (DVMA…MFKT), 634-668 (GSSA…GLRM), 669-699 (EEET…AGES), 703-737 (GKSV…GCDP), 738-772 (GAVT…NIEL), 773-807 (DTVG…GVPC), 808-842 (SIQT…GLYL), 843-877 (DEKI…GIKP), 878-912 (GTPS…GRCT), 913-947 (DLST…GIPL), 948-982 (SHSH…GISP), and 983-1017 (DSAC…SVED).

The protein belongs to the PPR family. P subfamily.

In Arabidopsis thaliana (Mouse-ear cress), this protein is Pentatricopeptide repeat-containing protein At5g27270 (EMB976).